The following is a 190-amino-acid chain: UPF0340 protein BCE33L5016 (190 aa).

Belongs to the UPF0340 family.

The chain is UPF0340 protein BCE33L5016 from Bacillus cereus (strain ZK / E33L).